The following is a 126-amino-acid chain: Aspartate 1-decarboxylase (126 aa).

Serine 25 acts as the Schiff-base intermediate with substrate; via pyruvic acid in catalysis. Residue serine 25 is modified to Pyruvic acid (Ser). Threonine 57 provides a ligand contact to substrate. Tyrosine 58 serves as the catalytic Proton donor. A substrate-binding site is contributed by glycine 73 to alanine 75.

The protein belongs to the PanD family. As to quaternary structure, heterooctamer of four alpha and four beta subunits. Pyruvate serves as cofactor. Is synthesized initially as an inactive proenzyme, which is activated by self-cleavage at a specific serine bond to produce a beta-subunit with a hydroxyl group at its C-terminus and an alpha-subunit with a pyruvoyl group at its N-terminus.

The protein resides in the cytoplasm. It carries out the reaction L-aspartate + H(+) = beta-alanine + CO2. Its pathway is cofactor biosynthesis; (R)-pantothenate biosynthesis; beta-alanine from L-aspartate: step 1/1. In terms of biological role, catalyzes the pyruvoyl-dependent decarboxylation of aspartate to produce beta-alanine. This Acinetobacter baylyi (strain ATCC 33305 / BD413 / ADP1) protein is Aspartate 1-decarboxylase.